We begin with the raw amino-acid sequence, 183 residues long: Troponin I, fast skeletal muscle (183 aa).

The residue at position 2 (Ser2) is an N-acetylserine. The interval 2-48 (SDEEKKRRAATARRQHLKSAMLQLAVTEIEKEAAAKEVEKQNYLAEH) is involved in binding TNC. Residues 97-117 (SQKLFDLRGKFKRPPLRRVRM) are involved in binding TNC and actin.

It belongs to the troponin I family. In terms of assembly, binds to actin and tropomyosin. In terms of processing, the N-terminus is blocked.

Troponin I is the inhibitory subunit of troponin, the thin filament regulatory complex which confers calcium-sensitivity to striated muscle actomyosin ATPase activity. In Gallus gallus (Chicken), this protein is Troponin I, fast skeletal muscle (TNNI2).